The following is a 244-amino-acid chain: Agamous-like MADS-box protein MADS2 (244 aa).

One can recognise an MADS-box domain in the interval 1–61 (MGRGRVELKR…GKLYEFCSSS (61 aa)). One can recognise a K-box domain in the interval 88 to 178 (EQSSYREYLK…TRKLDEISVK (91 aa)).

In terms of tissue distribution, expressed in flowers and seeds.

It localises to the nucleus. Its function is as follows. Probable transcription factor involved in flower development. The chain is Agamous-like MADS-box protein MADS2 from Vitis vinifera (Grape).